We begin with the raw amino-acid sequence, 335 residues long: Methionine import ATP-binding protein MetN 1 (335 aa).

Positions 2–242 constitute an ABC transporter domain; that stretch reads IEFQNVHKTY…PKHPTTRRFV (241 aa). 38–45 provides a ligand contact to ATP; it reads GHSGAGKS.

It belongs to the ABC transporter superfamily. Methionine importer (TC 3.A.1.24) family. The complex is composed of two ATP-binding proteins (MetN), two transmembrane proteins (MetI) and a solute-binding protein (MetQ).

It localises to the cell inner membrane. The catalysed reaction is L-methionine(out) + ATP + H2O = L-methionine(in) + ADP + phosphate + H(+). It carries out the reaction D-methionine(out) + ATP + H2O = D-methionine(in) + ADP + phosphate + H(+). Its function is as follows. Part of the ABC transporter complex MetNIQ involved in methionine import. Responsible for energy coupling to the transport system. This Pseudomonas fluorescens (strain ATCC BAA-477 / NRRL B-23932 / Pf-5) protein is Methionine import ATP-binding protein MetN 1.